The following is a 352-amino-acid chain: Nicotinate-nucleotide--dimethylbenzimidazole phosphoribosyltransferase (352 aa).

The active-site Proton acceptor is the Glu-318.

Belongs to the CobT family.

It catalyses the reaction 5,6-dimethylbenzimidazole + nicotinate beta-D-ribonucleotide = alpha-ribazole 5'-phosphate + nicotinate + H(+). The protein operates within nucleoside biosynthesis; alpha-ribazole biosynthesis; alpha-ribazole from 5,6-dimethylbenzimidazole: step 1/2. In terms of biological role, catalyzes the synthesis of alpha-ribazole-5'-phosphate from nicotinate mononucleotide (NAMN) and 5,6-dimethylbenzimidazole (DMB). The protein is Nicotinate-nucleotide--dimethylbenzimidazole phosphoribosyltransferase of Azotobacter vinelandii (strain DJ / ATCC BAA-1303).